The chain runs to 119 residues: Ribonuclease P protein component (119 aa).

This sequence belongs to the RnpA family. As to quaternary structure, consists of a catalytic RNA component (M1 or rnpB) and a protein subunit.

The enzyme catalyses Endonucleolytic cleavage of RNA, removing 5'-extranucleotides from tRNA precursor.. RNaseP catalyzes the removal of the 5'-leader sequence from pre-tRNA to produce the mature 5'-terminus. It can also cleave other RNA substrates such as 4.5S RNA. The protein component plays an auxiliary but essential role in vivo by binding to the 5'-leader sequence and broadening the substrate specificity of the ribozyme. In Listeria welshimeri serovar 6b (strain ATCC 35897 / DSM 20650 / CCUG 15529 / CIP 8149 / NCTC 11857 / SLCC 5334 / V8), this protein is Ribonuclease P protein component.